The sequence spans 432 residues: Trigger factor (432 aa).

One can recognise a PPIase FKBP-type domain in the interval 161–246 (EDRVTIDFTG…LKKVEERELP (86 aa)).

The protein belongs to the FKBP-type PPIase family. Tig subfamily. As to quaternary structure, homodimer and monomer. In vivo most of the ribosomes are in complex with monomeric TF. Uncomplexed TF, however, is in a monomer-dimer equilibrium with approximately two thirds of TF existing in a dimeric state.

The protein resides in the cytoplasm. It carries out the reaction [protein]-peptidylproline (omega=180) = [protein]-peptidylproline (omega=0). In terms of biological role, involved in protein export. Acts as a chaperone by maintaining the newly synthesized protein in an open conformation. Functions as a peptidyl-prolyl cis-trans isomerase. The chain is Trigger factor from Escherichia fergusonii (strain ATCC 35469 / DSM 13698 / CCUG 18766 / IAM 14443 / JCM 21226 / LMG 7866 / NBRC 102419 / NCTC 12128 / CDC 0568-73).